The following is a 363-amino-acid chain: Serpentine receptor class beta-17 (363 aa).

The next 7 membrane-spanning stretches (helical) occupy residues 46–66 (AFLL…GSII), 75–95 (LLAF…SCFL), 120–140 (VILA…SMLC), 169–189 (IGFV…LYMY), 214–234 (YIFI…IGLY), 273–293 (CAQL…RIFL), and 304–324 (VTEF…ICIV).

This sequence belongs to the nematode receptor-like protein srb family.

The protein resides in the membrane. This chain is Serpentine receptor class beta-17 (srb-17), found in Caenorhabditis elegans.